We begin with the raw amino-acid sequence, 202 residues long: Putative scarecrow-like protein 16 (202 aa).

The VHIID stretch occupies residues 1–26; that stretch reads MQIPTLIDSMANKLHKKPPPLLKLTV. The GRAS domain maps to 1–202; sequence MQIPTLIDSM…RVERLEPKSR (202 aa). The interval 45–82 is leucine repeat II (LRII); sequence ELGSKLVNFATTRNVAMEFRIISSSYSDGLSSLIEQLR. Positions 92 to 184 are PFYRE; the sequence is LVVNCHMMLH…EADISWKIDN (93 aa). The tract at residues 187 to 202 is SAW; the sequence is AKEGAERVERLEPKSR.

This sequence belongs to the GRAS family. Expressed in seedlings, leaves and flowers.

It is found in the nucleus. Probable transcription factor involved in plant development. This is Putative scarecrow-like protein 16 (SCL16) from Arabidopsis thaliana (Mouse-ear cress).